The following is a 603-amino-acid chain: ABC transporter E family member 1 (603 aa).

2 4Fe-4S ferredoxin-type domains span residues 7–39 (RIAI…KLCI) and 46–75 (KSAF…IINL). ABC transporter domains follow at residues 70–315 (IQII…FLAG) and 344–566 (VKSY…LSHL). Residues 110–117 (GTNGIGKS) and 381–388 (GENGTGKT) each bind ATP.

The protein belongs to the ABC transporter superfamily. ABCE family. As to expression, expressed in roots, stems, leaves, flowers and siliques.

The protein resides in the membrane. This chain is ABC transporter E family member 1 (ABCE1), found in Arabidopsis thaliana (Mouse-ear cress).